Consider the following 162-residue polypeptide: Serine-protein kinase RsbW (162 aa).

Belongs to the anti-sigma-factor family.

It catalyses the reaction L-seryl-[protein] + ATP = O-phospho-L-seryl-[protein] + ADP + H(+). The enzyme catalyses L-threonyl-[protein] + ATP = O-phospho-L-threonyl-[protein] + ADP + H(+). Its function is as follows. Negative regulator of sigma-B activity. Phosphorylates and inactivates its specific antagonist protein, RsbV. Upon phosphorylation of RsbV, RsbW is released and binds to sigma-B, thereby blocking its ability to form an RNA polymerase holoenzyme (E-sigma-B). In Bacillus pumilus (strain SAFR-032), this protein is Serine-protein kinase RsbW.